The sequence spans 183 residues: Hypoxanthine/guanine phosphoribosyltransferase (183 aa).

The protein belongs to the purine/pyrimidine phosphoribosyltransferase family. Archaeal HPRT subfamily. As to quaternary structure, homodimer.

It localises to the cytoplasm. It catalyses the reaction IMP + diphosphate = hypoxanthine + 5-phospho-alpha-D-ribose 1-diphosphate. The enzyme catalyses GMP + diphosphate = guanine + 5-phospho-alpha-D-ribose 1-diphosphate. It functions in the pathway purine metabolism; IMP biosynthesis via salvage pathway; IMP from hypoxanthine: step 1/1. Functionally, catalyzes a salvage reaction resulting in the formation of IMP that is energically less costly than de novo synthesis. The sequence is that of Hypoxanthine/guanine phosphoribosyltransferase from Methanotorris igneus (strain DSM 5666 / JCM 11834 / Kol 5).